Reading from the N-terminus, the 326-residue chain is Probable sodium/potassium-transporting ATPase subunit beta-3 (326 aa).

Residues 1–59 (MMSSRTRKIYLFVFMFISTSLQLMNGEAKAEPETFRQFLYNKQKGTVLGRTGTSWCQIT) are Cytoplasmic-facing. A helical; Signal-anchor for type II membrane protein transmembrane segment spans residues 60 to 80 (VFYIIFYIFLSAFFIGCLAIF). The Lumenal portion of the chain corresponds to 81 to 326 (LKTLDPKVPR…DKKPVAAPAA (246 aa)). N-linked (GlcNAc...) asparagine glycosylation is found at Asn-144 and Asn-147. A disulfide bond links Cys-234 and Cys-291.

This sequence belongs to the X(+)/potassium ATPases subunit beta family. In terms of assembly, the sodium/potassium-transporting ATPase is composed of a catalytic alpha subunit, an auxiliary non-catalytic beta subunit and an additional regulatory subunit.

It is found in the cell membrane. This is the non-catalytic component of the active enzyme, which catalyzes the hydrolysis of ATP coupled with the exchange of Na(+) and K(+) ions across the plasma membrane. The beta subunit regulates, through assembly of alpha/beta heterodimers, the number of sodium pumps transported to the plasma membrane. Implicated in genomic response to various soil bacteria that affects fitness, lifespan and brood size. This is Probable sodium/potassium-transporting ATPase subunit beta-3 (nkb-3) from Caenorhabditis briggsae.